Consider the following 267-residue polypeptide: Hydroxyethylthiazole kinase (267 aa).

Residue Met-46 coordinates substrate. Residues Arg-122 and Ser-168 each coordinate ATP. Residue Gly-195 coordinates substrate.

The protein belongs to the Thz kinase family. Mg(2+) serves as cofactor.

The catalysed reaction is 5-(2-hydroxyethyl)-4-methylthiazole + ATP = 4-methyl-5-(2-phosphooxyethyl)-thiazole + ADP + H(+). It functions in the pathway cofactor biosynthesis; thiamine diphosphate biosynthesis; 4-methyl-5-(2-phosphoethyl)-thiazole from 5-(2-hydroxyethyl)-4-methylthiazole: step 1/1. In terms of biological role, catalyzes the phosphorylation of the hydroxyl group of 4-methyl-5-beta-hydroxyethylthiazole (THZ). This chain is Hydroxyethylthiazole kinase, found in Nitratidesulfovibrio vulgaris (strain ATCC 29579 / DSM 644 / CCUG 34227 / NCIMB 8303 / VKM B-1760 / Hildenborough) (Desulfovibrio vulgaris).